Consider the following 162-residue polypeptide: Transcription antitermination protein NusB (162 aa).

The protein belongs to the NusB family.

Its function is as follows. Involved in transcription antitermination. Required for transcription of ribosomal RNA (rRNA) genes. Binds specifically to the boxA antiterminator sequence of the ribosomal RNA (rrn) operons. The polypeptide is Transcription antitermination protein NusB (Mycobacterium sp. (strain JLS)).